Here is a 234-residue protein sequence, read N- to C-terminus: uncharacterized protein (234 aa).

2 disordered regions span residues 1-65 and 182-234; these read MTSV…RRGP and ARGA…GRKT.

This is an uncharacterized protein from Homo sapiens (Human).